Consider the following 138-residue polypeptide: Basic phospholipase A2 Pla2Vb (138 aa).

The signal sequence occupies residues 1–16 (MRTLWIVAVWLMGVEG). 7 disulfide bridges follow: C42-C131, C44-C60, C59-C111, C65-C138, C66-C104, C73-C97, and C91-C102. The Ca(2+) site is built by Y43, G45, and G47. The active site involves H63. A Ca(2+)-binding site is contributed by D64. D105 is a catalytic residue.

It belongs to the phospholipase A2 family. Group II subfamily. D49 sub-subfamily. Ca(2+) serves as cofactor. Expressed by the venom gland.

The protein resides in the secreted. It carries out the reaction a 1,2-diacyl-sn-glycero-3-phosphocholine + H2O = a 1-acyl-sn-glycero-3-phosphocholine + a fatty acid + H(+). Snake venom phospholipase A2 (PLA2) that exhibits medium anticoagulant effects by binding to factor Xa (F10) and inhibiting the prothrombinase activity (IC(50) is 90 nM). PLA2 catalyzes the calcium-dependent hydrolysis of the 2-acyl groups in 3-sn-phosphoglycerides. In Vipera berus berus (Common viper), this protein is Basic phospholipase A2 Pla2Vb.